A 464-amino-acid chain; its full sequence is Propanal dehydrogenase (CoA-propanoylating) (464 aa).

Residues 1–18 (MNTSELETLIRTILSEQL) form a targets protein to the BMC region.

The protein belongs to the EutE/PduP family. As to quaternary structure, interacts with BMC shell proteins PduA and PduJ, which target this protein to BMC. Interacts with PduQ, probably via the N-terminus of PduQ. Interacts with PduK, probably with its BMC-containing N-terminus.

It localises to the bacterial microcompartment. It carries out the reaction propanal + NAD(+) + CoA = propanoyl-CoA + NADH + H(+). The protein operates within polyol metabolism; 1,2-propanediol degradation. Functionally, a CoA-acylating aldehyde dehydrogenase required for optimal 1,2-propanediol (1,2-PD) degradation. Optimizes growth in the bacterial microcompartment (BMC) dedicated to 1,2-PD degradation by minimizing propionaldehyde toxicity. Directly targeted to the BMC. NAD(+) and NADH are regenerated internally within the Pdu BMC by the PduP and PduQ enzymes, which reduce NAD(+) and oxidize NADH respectively, although there must also be cofactor transport across the BMC. In terms of biological role, the 1,2-PD-specific bacterial microcompartment (BMC) concentrates low levels of 1,2-PD catabolic enzymes, concentrates volatile reaction intermediates thus enhancing pathway flux and keeps the level of toxic, mutagenic propionaldehyde low. The chain is Propanal dehydrogenase (CoA-propanoylating) from Salmonella typhimurium (strain LT2 / SGSC1412 / ATCC 700720).